A 668-amino-acid chain; its full sequence is Biotin biosynthesis bifunctional protein BioWF (668 aa).

Substrate is bound at residue R293. Position 380–381 (380–381) interacts with pyridoxal 5'-phosphate; the sequence is GY. Residue H405 participates in substrate binding. Pyridoxal 5'-phosphate contacts are provided by residues S451, 476–479, and 507–510; these read DDAH and TASK. Residue K510 is modified to N6-(pyridoxal phosphate)lysine.

This sequence in the N-terminal section; belongs to the BioW family. The protein in the C-terminal section; belongs to the class-II pyridoxal-phosphate-dependent aminotransferase family. BioF subfamily. In terms of assembly, homodimer. Mg(2+) is required as a cofactor. Pyridoxal 5'-phosphate serves as cofactor.

The catalysed reaction is heptanedioate + ATP + CoA = 6-carboxyhexanoyl-CoA + AMP + diphosphate. It carries out the reaction 6-carboxyhexanoyl-[ACP] + L-alanine + H(+) = (8S)-8-amino-7-oxononanoate + holo-[ACP] + CO2. It participates in metabolic intermediate metabolism; pimeloyl-CoA biosynthesis; pimeloyl-CoA from pimelate: step 1/1. It functions in the pathway cofactor biosynthesis; biotin biosynthesis. In terms of biological role, catalyzes both the decarboxylative condensation of pimeloyl-[acyl-carrier protein] and L-alanine to produce 8-amino-7-oxononanoate (AON), [acyl-carrier protein], and carbon dioxide, and the transformation of pimelate into pimeloyl-CoA with concomitant hydrolysis of ATP to AMP. The polypeptide is Biotin biosynthesis bifunctional protein BioWF (Cutibacterium acnes (strain SK137) (Propionibacterium acnes)).